The sequence spans 258 residues: Imidazole glycerol phosphate synthase subunit HisF (258 aa).

Catalysis depends on residues Asp-11 and Asp-130.

It belongs to the HisA/HisF family. Heterodimer of HisH and HisF.

The protein resides in the cytoplasm. It catalyses the reaction 5-[(5-phospho-1-deoxy-D-ribulos-1-ylimino)methylamino]-1-(5-phospho-beta-D-ribosyl)imidazole-4-carboxamide + L-glutamine = D-erythro-1-(imidazol-4-yl)glycerol 3-phosphate + 5-amino-1-(5-phospho-beta-D-ribosyl)imidazole-4-carboxamide + L-glutamate + H(+). The protein operates within amino-acid biosynthesis; L-histidine biosynthesis; L-histidine from 5-phospho-alpha-D-ribose 1-diphosphate: step 5/9. In terms of biological role, IGPS catalyzes the conversion of PRFAR and glutamine to IGP, AICAR and glutamate. The HisF subunit catalyzes the cyclization activity that produces IGP and AICAR from PRFAR using the ammonia provided by the HisH subunit. This Escherichia coli O17:K52:H18 (strain UMN026 / ExPEC) protein is Imidazole glycerol phosphate synthase subunit HisF.